Here is a 507-residue protein sequence, read N- to C-terminus: ATP synthase subunit alpha (507 aa).

170–177 provides a ligand contact to ATP; the sequence is GDRQTGKT.

It belongs to the ATPase alpha/beta chains family. In terms of assembly, F-type ATPases have 2 components, CF(1) - the catalytic core - and CF(0) - the membrane proton channel. CF(1) has five subunits: alpha(3), beta(3), gamma(1), delta(1), epsilon(1). CF(0) has three main subunits: a(1), b(2) and c(9-12). The alpha and beta chains form an alternating ring which encloses part of the gamma chain. CF(1) is attached to CF(0) by a central stalk formed by the gamma and epsilon chains, while a peripheral stalk is formed by the delta and b chains.

It localises to the cell inner membrane. The catalysed reaction is ATP + H2O + 4 H(+)(in) = ADP + phosphate + 5 H(+)(out). Functionally, produces ATP from ADP in the presence of a proton gradient across the membrane. The alpha chain is a regulatory subunit. The protein is ATP synthase subunit alpha of Thermosipho melanesiensis (strain DSM 12029 / CIP 104789 / BI429).